The sequence spans 114 residues: Fluoride-specific ion channel FluC 2 (114 aa).

4 consecutive transmembrane segments (helical) span residues 3-23 (YVII…ECWL), 31-51 (LMTA…WILA), 57-77 (GIEL…TFCM), and 92-112 (MIYL…GWNV). Na(+) contacts are provided by Gly-67 and Thr-70.

Belongs to the fluoride channel Fluc/FEX (TC 1.A.43) family.

Its subcellular location is the cell membrane. The catalysed reaction is fluoride(in) = fluoride(out). Its activity is regulated as follows. Na(+) is not transported, but it plays an essential structural role and its presence is essential for fluoride channel function. Its function is as follows. Fluoride-specific ion channel. Important for reducing fluoride concentration in the cell, thus reducing its toxicity. This chain is Fluoride-specific ion channel FluC 2, found in Shouchella clausii (strain KSM-K16) (Alkalihalobacillus clausii).